A 452-amino-acid polypeptide reads, in one-letter code: Protein tipE (452 aa).

The Cytoplasmic portion of the chain corresponds to Met1–Ala20. Residues Phe21–Ile41 form a helical membrane-spanning segment. The Extracellular segment spans residues Glu42–Thr274. Residues Asn72, Asn102, Asn108, Asn212, and Asn237 are each glycosylated (N-linked (GlcNAc...) asparagine). The chain crosses the membrane as a helical span at residues Leu275–Leu295. The Cytoplasmic portion of the chain corresponds to Thr296–Val452. A compositionally biased stretch (polar residues) spans Ala423–Thr444. Residues Ala423–Val452 form a disordered region.

As to expression, preferentially expressed in the central nervous system of developing embryos, weaker expression is seen in the peripheral nervous system. In pupae and adults, expression is seen predominantly in heads, body and legs.

Its subcellular location is the membrane. In terms of biological role, enhances para sodium channel function. Required during pupal development to rescue adult paralysis and also protects adult flies against heat-induced lethality. The sequence is that of Protein tipE (tipE) from Drosophila melanogaster (Fruit fly).